Consider the following 822-residue polypeptide: Fibroblast growth factor receptor 1 (822 aa).

The first 21 residues, 1 to 21, serve as a signal peptide directing secretion; the sequence is MWGWRGLLFWAVLVTATLCTA. Residues 22 to 376 are Extracellular-facing; sequence RPAPTLPEQA…AVMTSPLYLE (355 aa). In terms of domain architecture, Ig-like C2-type 1 spans 25–119; it reads PTLPEQAQPW…DTTYFSVNVS (95 aa). A disulfide bond links Cys55 and Cys101. 2 N-linked (GlcNAc...) asparagine glycosylation sites follow: Asn77 and Asn117. The segment at 120–162 is disordered; it reads DALPSSEDDDDDDDSSSEEKETDNTKPNRRPVAPYWTSPEKME. A compositionally biased stretch (acidic residues) spans 125–135; it reads SEDDDDDDDSS. The segment covering 136-145 has biased composition (basic and acidic residues); sequence SEEKETDNTK. 2 Ig-like C2-type domains span residues 158–246 and 255–357; these read PEKM…YQLD and PILQ…AWLT. The tract at residues 160 to 177 is heparin-binding; that stretch reads KMEKKLHAVPAAKTVKFK. A disulfide bridge links Cys178 with Cys230. N-linked (GlcNAc...) asparagine glycosylation is found at Asn227, Asn240, Asn264, Asn296, Asn317, and Asn330. Cys277 and Cys341 form a disulfide bridge. Residues 377-397 traverse the membrane as a helical segment; that stretch reads IIIYCTGAFLISCMVGSVIIY. The Cytoplasmic portion of the chain corresponds to 398–822; sequence KMKSGTKKSD…QLANGGLNRR (425 aa). Phosphotyrosine; by autocatalysis is present on Tyr463. One can recognise a Protein kinase domain in the interval 478 to 767; it reads LVLGKPLGEG…VALTSNQEYL (290 aa). ATP is bound by residues 484–490, Lys514, 562–564, and Asn568; these read LGEGCFG and EYA. A phosphotyrosine; by autocatalysis mark is found at Tyr583 and Tyr585. Asp623 acts as the Proton acceptor in catalysis. Arg627 and Asp641 together coordinate ATP. 4 positions are modified to phosphotyrosine; by autocatalysis: Tyr653, Tyr654, Tyr730, and Tyr766. The interval 770–822 is disordered; that stretch reads SMPLDQDSPSFPDTRSSTCSSGEDSVFSHEPFPEEPCLPRHPTQLANGGLNRR. The span at 776–792 shows a compositional bias: polar residues; that stretch reads DSPSFPDTRSSTCSSGE.

This sequence belongs to the protein kinase superfamily. Tyr protein kinase family. Fibroblast growth factor receptor subfamily. As to quaternary structure, monomer. Homodimer after ligand binding. Interacts predominantly with FGF1 and FGF2, but can also interact with FGF3, FGF4, FGF5, FGF6, FGF8, FGF10, FGF19, FGF21, FGF22 and FGF23 (in vitro). Ligand specificity is determined by tissue-specific expression of isoforms, and differences in the third Ig-like domain are crucial for ligand specificity. Affinity for fibroblast growth factors (FGFs) is increased by heparan sulfate glycosaminoglycans that function as coreceptors. Likewise, KLB increases the affinity for FGF19, FGF21 and FGF23. Interacts (phosphorylated on Tyr-766) with PLCG1 (via SH2 domains). Interacts with FRS2. Interacts (via C-terminus) with NEDD4 (via WW3 domain). Interacts with RPS6KA1. Interacts with KL. Interacts with SHB (via SH2 domain) and GRB10. Interacts with ANOS1; this interaction does not interfere with FGF2-binding to FGFR1, but prevents binding of heparin-bound FGF2. Interacts with SOX2 and SOX3. Interacts with FLRT1, FLRT2 and FLRT3. Found in a ternary complex with FGF1 and ITGAV:ITGB3. Post-translationally, autophosphorylated. Binding of FGF family members together with heparan sulfate proteoglycan or heparin promotes receptor dimerization and autophosphorylation on tyrosine residues. Autophosphorylation occurs in trans between the two FGFR molecules present in the dimer and proceeds in a highly ordered manner. Initial autophosphorylation at Tyr-653 increases the kinase activity by a factor of 50 to 100. After this, Tyr-583 becomes phosphorylated, followed by phosphorylation of Tyr-463, Tyr-766, Tyr-583 and Tyr-585. In a third stage, Tyr-654 is autophosphorylated, resulting in a further tenfold increase of kinase activity. Phosphotyrosine residues provide docking sites for interacting proteins and so are crucial for FGFR1 function and its regulation. Ubiquitinated. FGFR1 is rapidly ubiquitinated by NEDD4 after autophosphorylation, leading to internalization and lysosomal degradation. CBL is recruited to activated FGFR1 via FRS2 and GRB2, and mediates ubiquitination and subsequent degradation of FGFR1. In terms of processing, N-glycosylated in the endoplasmic reticulum. The N-glycan chains undergo further maturation to an Endo H-resistant form in the Golgi apparatus. In terms of tissue distribution, expressed in the parathyroid.

Its subcellular location is the cell membrane. It is found in the nucleus. It localises to the cytoplasm. The protein localises to the cytosol. The protein resides in the cytoplasmic vesicle. It carries out the reaction L-tyrosyl-[protein] + ATP = O-phospho-L-tyrosyl-[protein] + ADP + H(+). Present in an inactive conformation in the absence of bound ligand. Ligand binding leads to dimerization and activation by sequential autophosphorylation on tyrosine residues. Tyrosine-protein kinase that acts as a cell-surface receptor for fibroblast growth factors and plays an essential role in the regulation of embryonic development, cell proliferation, differentiation and migration. Required for normal mesoderm patterning and correct axial organization during embryonic development, normal skeletogenesis and normal development of the gonadotropin-releasing hormone (GnRH) neuronal system. Phosphorylates PLCG1, FRS2, GAB1 and SHB. Ligand binding leads to the activation of several signaling cascades. Activation of PLCG1 leads to the production of the cellular signaling molecules diacylglycerol and inositol 1,4,5-trisphosphate. Phosphorylation of FRS2 triggers recruitment of GRB2, GAB1, PIK3R1 and SOS1, and mediates activation of RAS, MAPK1/ERK2, MAPK3/ERK1 and the MAP kinase signaling pathway, as well as of the AKT1 signaling pathway. Promotes phosphorylation of SHC1, STAT1 and PTPN11/SHP2. In the nucleus, enhances RPS6KA1 and CREB1 activity and contributes to the regulation of transcription. FGFR1 signaling is down-regulated by IL17RD/SEF, and by FGFR1 ubiquitination, internalization and degradation. The chain is Fibroblast growth factor receptor 1 (Fgfr1) from Rattus norvegicus (Rat).